The chain runs to 423 residues: MSEDQGKDYTLESDSELRFEIEQKDAKVLVSLVSGFAELFGTELVKKKQYEFGVGAKVAIFTYQGCVLHVSGKMDVCYISKETPMVQYVNCHAALEQFRMEAEEKDRYGPVAMVVGPMDVGKSTLCRILLNYAVRVGRRPLYADLDVGQGSIAISGSVATILIERPANVEEGFAKTAPLVYHFGHKSPSGNSVLYNAVVSKMAEVTLQSLNSNKRTKSSGIIINTCGWVKGSGYAHLLHAAKAYGACAIFVLDQERLYNELLRDVPKGVHVVLLPKSGGVVERSKELRHEARDQRIKEYFYGNTRAPFYPFSFEVKFQDLRLYKIGAPPLPDSCMPIGMKAEDNKTKVVAVTPTPALIHHVLALSFAESVEDDVIGTNVAGFCCVTEVDMERQAVMLLSPQPRPLPPNALLLWSELQFMDNHT.

Residues Glu16, Lys57, and 119–124 each bind ATP; that span reads DVGKST.

It belongs to the Clp1 family. Clp1 subfamily.

It is found in the nucleus. In terms of biological role, required for endonucleolytic cleavage during polyadenylation-dependent pre-mRNA 3'-end formation. The chain is Protein CLP1 homolog (cbc) from Drosophila melanogaster (Fruit fly).